A 954-amino-acid chain; its full sequence is Chromosomal passenger complex protein BIR1 (954 aa).

BIR repeat units follow at residues 20–117 and 153–241; these read RLRT…LLIY and RKFT…YFFQ. Positions 208, 211, 228, and 237 each coordinate Zn(2+). The interval 375 to 419 is disordered; it reads NVQLTQSSSPIKKKRKFKRISPRKIFDEEDSEHSLNNNSANGDNK. Basic residues predominate over residues 385 to 396; that stretch reads IKKKRKFKRISP. A phosphoserine mark is found at S477, S508, and S552. Disordered regions lie at residues 541–645 and 661–685; these read DIDR…SGKV and FSASDFSPSSQSEQSSKSSSVISTP. Positions 556–583 are enriched in basic and acidic residues; that stretch reads PKTHELIRDNSEKREAQNGEFRHQKDST. A Phosphoserine modification is found at S587. Over residues 593 to 604 the composition is skewed to polar residues; sequence SNKSGDNSSNIT. Residues S751 and S765 each carry the phosphoserine modification. Positions 798–839 are disordered; sequence LVSGTSSYPRNSRLEEQRKETSTSLADNSKKGSSFNEGNNEK. A compositionally biased stretch (basic and acidic residues) spans 809 to 818; sequence SRLEEQRKET. Polar residues predominate over residues 819-835; it reads STSLADNSKKGSSFNEG.

In terms of assembly, component of the CPC complex at least composed of IPL1, BIR1 and SLI15. Interacts with CBF2/NDC10. Interacts with CBF3D/SKP1.

Component of the chromosomal passenger complex (CPC), a complex that acts as a key regulator of chromosome segregation and cytokinesis. This Saccharomyces cerevisiae (strain ATCC 204508 / S288c) (Baker's yeast) protein is Chromosomal passenger complex protein BIR1 (BIR1).